Here is a 525-residue protein sequence, read N- to C-terminus: MFESLSDRLTAALQGLRGKGRLTDADIDATTREIRLALLEADVSLPVVRAFIHRIKERARGAEVSSALNPAQQVVKIVNEELISILGGETRELAFAKTPPTVVMLAGLQGSGKTTLAGKLAARLRGQGHTPLLVACDLQRPAAVNQLQVVGERAGVPVFAPHPGASPESGPGDPVAVAAAGLAEARAKHFDVVIVDTAGRLGIDEELMAQAAAIRDAINPDEVLFVLDAMIGQDAVTTAAAFGEGVGFTGVALTKLDGDARGGAALSVREVTGVPILFASTGEKLEDFDVFHPDRMASRILGMGDVLSLIEQAEQVFDAQQAEEAAAKIGAGELTLEDFLEQMLAVRKMGPIGNLLGMLPGAAQMKDALAEVDDKQLDRVQAIIRGMTPQERADPKIINASRRLRIANGSGVTVSEVNQLVERFFEARKMMSSMLGGMGIPGIGRKSATRKSKGAKGKSGKKSKKGTRGPTPPKVKSPFGVPGMPGLAGLPGGLPDLSQMPKGLDELPPGLADFDLSKLKFPGKK.

GTP contacts are provided by residues 107–114 (GLQGSGKT), 196–200 (DTAGR), and 254–257 (TKLD). The disordered stretch occupies residues 437-525 (GMGIPGIGRK…LSKLKFPGKK (89 aa)). The segment covering 447 to 467 (SATRKSKGAKGKSGKKSKKGT) has biased composition (basic residues). A compositionally biased stretch (low complexity) spans 480 to 497 (GVPGMPGLAGLPGGLPDL).

Belongs to the GTP-binding SRP family. SRP54 subfamily. Part of the signal recognition particle protein translocation system, which is composed of SRP and FtsY.

The protein localises to the cytoplasm. The enzyme catalyses GTP + H2O = GDP + phosphate + H(+). Involved in targeting and insertion of nascent membrane proteins into the cytoplasmic membrane. Binds to the hydrophobic signal sequence of the ribosome-nascent chain (RNC) as it emerges from the ribosomes. The SRP-RNC complex is then targeted to the cytoplasmic membrane where it interacts with the SRP receptor FtsY. The protein is Signal recognition particle protein of Mycobacterium bovis (strain ATCC BAA-935 / AF2122/97).